The chain runs to 638 residues: NBPF family member NBPF4 (638 aa).

Coiled-coil stretches lie at residues 10-43 (SERA…EKFL) and 69-115 (DSVL…KLRE). Residues 157–285 (HLVHKLSPEN…VPPRHHDKSN (129 aa)) form a disordered region. Residues 165 to 179 (ENDEDEDEDEDDKDE) show a composition bias toward acidic residues. The Olduvai 1 domain occupies 174–261 (EDDKDEEVEK…EEEEALNIPP (88 aa)). Over residues 192–202 (EVQKTEEKEVP) the composition is skewed to basic and acidic residues. Positions 214-226 (SNSHNPSNSNQPH) are enriched in low complexity. Basic and acidic residues-rich tracts occupy residues 232–251 (TFKE…HPHD) and 264–273 (QNDHEEEEGK). Olduvai domains follow at residues 326–399 (EKQS…ALVD) and 400–503 (KIKK…SQAQ). Residues 562-584 (GMKNPPQLEDDALEGSASNTQGR) form a disordered region.

It belongs to the NBPF family. Expressed in testis.

The protein localises to the cytoplasm. The sequence is that of NBPF family member NBPF4 from Homo sapiens (Human).